A 619-amino-acid polypeptide reads, in one-letter code: Thiohydroximate-O-sulfate sulfur/sulfate-lyase (nitrile-forming) NSP4 (619 aa).

2 Jacalin-type lectin domains span residues 2-142 and 151-292; these read AQKV…YFAP and AKKL…YISL. Kelch repeat units follow at residues 326–374, 379–425, 429–478, 480–524, and 528–583; these read KIYS…VCMV, TLYV…SMAA, NVYV…VVQG, VWVV…ASAA, and HIVI…GWTA. The active-site Proton donor is Arg-386. A (Z)-N-(sulfonatooxy)alkanimidothioate is bound by residues Arg-386, Ser-419, Arg-441, Gly-470, and Val-519. The active-site Proton donor is Arg-441. Positions 535, 539, and 543 each coordinate Fe(2+). Trp-581 provides a ligand contact to a (Z)-N-(sulfonatooxy)alkanimidothioate.

Belongs to the jacalin lectin family. Fe(2+) serves as cofactor. In terms of tissue distribution, mainly expressed in roots, and, to a lower extent, in seedlings and leaves. Observed in seeds.

The enzyme catalyses a (Z)-N-(sulfonatooxy)alkanimidothioate = a nitrile + sulfur + sulfate. It carries out the reaction (Z)-phenyl-N-(sulfonatooxy)methanimidothioate = phenylacetonitrile + sulfur + sulfate. The catalysed reaction is (Z)-N-(sulfonatooxy)prop-2-enimidothioate = but-3-enenitrile + sulfur + sulfate. Functionally, specifier protein that contributes to constitutive and herbivore-induced simple nitrile formation. Promotes simple nitriles, but not epithionitrile or thiocyanate formation. Converts allylglucosinolate and benzylglucosinolate (glucotropaeolin) to their corresponding simple nitriles in the presence of myrosinase. The polypeptide is Thiohydroximate-O-sulfate sulfur/sulfate-lyase (nitrile-forming) NSP4 (Arabidopsis thaliana (Mouse-ear cress)).